Reading from the N-terminus, the 161-residue chain is Phosphopantetheine adenylyltransferase (161 aa).

It belongs to the eukaryotic CoaD family.

The protein resides in the cytoplasm. It carries out the reaction (R)-4'-phosphopantetheine + ATP + H(+) = 3'-dephospho-CoA + diphosphate. It participates in cofactor biosynthesis; coenzyme A biosynthesis. Functionally, reversibly transfers an adenylyl group from ATP to 4'-phosphopantetheine, yielding dephospho-CoA (dPCoA) and pyrophosphate. This is Phosphopantetheine adenylyltransferase from Methanosarcina barkeri (strain Fusaro / DSM 804).